Consider the following 541-residue polypeptide: uncharacterized protein (541 aa).

The signal sequence occupies residues Met1–Ser22. Residue Cys23 is the site of N-palmitoyl cysteine attachment. Residue Cys23 is the site of S-diacylglycerol cysteine attachment. 2 disordered regions span residues Ala446–Leu468 and Lys480–Gln514. Residues Gly448 to Ser460 are compositionally biased toward low complexity. Basic and acidic residues predominate over residues Lys480 to Asp490.

Belongs to the MG185/MG260 family.

It is found in the cell membrane. This is an uncharacterized protein from Mycoplasma pneumoniae (strain ATCC 29342 / M129 / Subtype 1) (Mycoplasmoides pneumoniae).